A 286-amino-acid chain; its full sequence is ATP synthase gamma chain (286 aa).

It belongs to the ATPase gamma chain family. As to quaternary structure, F-type ATPases have 2 components, CF(1) - the catalytic core - and CF(0) - the membrane proton channel. CF(1) has five subunits: alpha(3), beta(3), gamma(1), delta(1), epsilon(1). CF(0) has three main subunits: a, b and c.

It is found in the cell inner membrane. In terms of biological role, produces ATP from ADP in the presence of a proton gradient across the membrane. The gamma chain is believed to be important in regulating ATPase activity and the flow of protons through the CF(0) complex. This chain is ATP synthase gamma chain, found in Shewanella woodyi (strain ATCC 51908 / MS32).